The following is a 1812-amino-acid chain: Protein virilizer homolog (1812 aa).

A2 carries the post-translational modification N-acetylalanine. 2 disordered regions span residues 132–302 (ISHD…EQIS) and 576–596 (KTSS…GLER). 2 positions are modified to phosphoserine: S133 and S138. Residues 139 to 152 (PPPPPPPPPPPQPQ) show a composition bias toward pro residues. The segment covering 160-169 (KHADGEKEDQ) has biased composition (basic and acidic residues). S173 is modified (phosphoserine). Residues 174 to 190 (PPRPQPRGPRTPPGPPP) are compositionally biased toward pro residues. T184 carries the post-translational modification Phosphothreonine. S222 bears the Phosphoserine mark. The span at 224–233 (DRNSVPQEGQ) shows a compositional bias: polar residues. Acidic residues-rich tracts occupy residues 234–266 (YSDE…EDED) and 274–302 (IPEE…EQIS). The segment covering 584 to 596 (SEPDHDTDAGLER) has biased composition (basic and acidic residues). Y914 bears the Phosphotyrosine mark. S1579 is subject to Phosphoserine. Disordered regions lie at residues 1616–1635 (HVVP…GIRP) and 1663–1812 (KEVV…SFTR). Residues 1689–1698 (GFSGNRGGRG) are compositionally biased toward gly residues. T1708 is subject to Phosphothreonine. Omega-N-methylarginine is present on R1723. The span at 1723-1748 (RGSSWSAQNTPRGNYNESRGGQSNFN) shows a compositional bias: polar residues. Residue R1741 is modified to Asymmetric dimethylarginine; alternate. Omega-N-methylarginine; alternate is present on R1741. Residues R1773, R1775, and R1793 each carry the asymmetric dimethylarginine modification. Residues 1788–1802 (GSGGSRGKFVSGGSG) show a composition bias toward gly residues. Positions 1803–1812 (RGRHVRSFTR) are enriched in basic residues.

Belongs to the vir family. In terms of assembly, component of the WMM complex, a N6-methyltransferase complex composed of a catalytic subcomplex, named MAC, and of an associated subcomplex, named MACOM. The MAC subcomplex is composed of METTL3 and METTL14. The MACOM subcomplex is composed of WTAP, ZC3H13, CBLL1/HAKAI, VIRMA, and, in some cases of RBM15 (RBM15 or RBM15B). Interacts with WTAP. Also a component of a MACOM-like complex, named WTAP complex, composed of WTAP, ZC3H13, CBLL1, VIRMA, RBM15, BCLAF1 and THRAP3. Interacts with NUDT21 and CPSF6.

Its subcellular location is the nucleus speckle. The protein localises to the nucleus. It localises to the nucleoplasm. The protein resides in the cytoplasm. Functionally, associated component of the WMM complex, a complex that mediates N6-methyladenosine (m6A) methylation of RNAs, a modification that plays a role in the efficiency of mRNA splicing and RNA processing. Acts as a key regulator of m6A methylation by promoting m6A methylation of mRNAs in the 3'-UTR near the stop codon: recruits the catalytic core components METTL3 and METTL14, thereby guiding m6A methylation at specific sites. Required for mRNA polyadenylation via its role in selective m6A methylation: m6A methylation of mRNAs in the 3'-UTR near the stop codon correlating with alternative polyadenylation (APA). This chain is Protein virilizer homolog, found in Homo sapiens (Human).